A 336-amino-acid polypeptide reads, in one-letter code: Terephthalate 1,2-dioxygenase, reductase component 2 (336 aa).

The 2Fe-2S ferredoxin-type domain maps to 3-91; the sequence is HQIHIHDSDI…DIRIHPSSFR (89 aa). Residues Cys37, Cys42, Cys45, and Cys75 each coordinate [2Fe-2S] cluster. One can recognise an FAD-binding FR-type domain in the interval 98–197; that stretch reads RKRFTAKVYS…ELPFGSIALK (100 aa).

Monomer. Part of a multicomponent enzyme system composed of a reductase (TphA1I or TphA1II) and a two-subunit oxygenase component (TphA2I or TphA2II and TphA3I or TphA3II). It depends on FAD as a cofactor. The cofactor is [2Fe-2S] cluster.

It catalyses the reaction terephthalate + NADH + O2 + H(+) = (3S,4R)-3,4-dihydroxycyclohexa-1,5-diene-1,4-dicarboxylate + NAD(+). In terms of biological role, component of the terephthalate 1,2-dioxygenase multicomponent enzyme system which catalyzes the dioxygenation of terephthalate (TER/TPA) to 1,2-dihydroxy-3,5-cyclohexadiene-1,4-dicarboxylic acid (DCD). TphA1 probably reduces TphA2A3. It can also use 2,5-dicarboxypyridine (PDC) and 1,4-napthalenedicarboxylic acid (NDC) as substrates, and preferentially uses NADPH which is the physiological electron donor. This chain is Terephthalate 1,2-dioxygenase, reductase component 2 (tphA1II), found in Comamonas sp.